The following is a 156-amino-acid chain: Small ribosomal subunit protein uS7 (156 aa).

Belongs to the universal ribosomal protein uS7 family. Part of the 30S ribosomal subunit. Contacts proteins S9 and S11.

In terms of biological role, one of the primary rRNA binding proteins, it binds directly to 16S rRNA where it nucleates assembly of the head domain of the 30S subunit. Is located at the subunit interface close to the decoding center, probably blocks exit of the E-site tRNA. The sequence is that of Small ribosomal subunit protein uS7 from Nitrobacter winogradskyi (strain ATCC 25391 / DSM 10237 / CIP 104748 / NCIMB 11846 / Nb-255).